The primary structure comprises 261 residues: tRNA U34 carboxymethyltransferase (261 aa).

Residues Lys-25, Trp-39, Lys-44, Gly-63, 114 to 115 (VE), Tyr-135, and Arg-250 contribute to the carboxy-S-adenosyl-L-methionine site.

It belongs to the class I-like SAM-binding methyltransferase superfamily. CmoB family. In terms of assembly, homotetramer.

The enzyme catalyses carboxy-S-adenosyl-L-methionine + 5-hydroxyuridine(34) in tRNA = 5-carboxymethoxyuridine(34) in tRNA + S-adenosyl-L-homocysteine + H(+). Its function is as follows. Catalyzes carboxymethyl transfer from carboxy-S-adenosyl-L-methionine (Cx-SAM) to 5-hydroxyuridine (ho5U) to form 5-carboxymethoxyuridine (cmo5U) at position 34 in tRNAs. The chain is tRNA U34 carboxymethyltransferase from Helicobacter pylori (strain HPAG1).